The following is a 286-amino-acid chain: uncharacterized protein (286 aa).

2 helical membrane passes run 201 to 221 (VIYSITGAFSFIFGLGVLCET) and 231 to 251 (AIILGFIILILILAIVNYLMM).

The protein resides in the cell membrane. This is an uncharacterized protein from Methanocaldococcus jannaschii (strain ATCC 43067 / DSM 2661 / JAL-1 / JCM 10045 / NBRC 100440) (Methanococcus jannaschii).